Consider the following 560-residue polypeptide: Glucose-6-phosphate isomerase, cytosolic (560 aa).

Ala2 carries the post-translational modification N-acetylalanine. Glu361 functions as the Proton donor in the catalytic mechanism. Active-site residues include His392 and Lys517.

This sequence belongs to the GPI family. In terms of assembly, homodimer.

It localises to the cytoplasm. It catalyses the reaction alpha-D-glucose 6-phosphate = beta-D-fructose 6-phosphate. Its pathway is carbohydrate degradation; glycolysis; D-glyceraldehyde 3-phosphate and glycerone phosphate from D-glucose: step 2/4. With respect to regulation, inhibited by glycerol-3-P (G3P). This Arabidopsis thaliana (Mouse-ear cress) protein is Glucose-6-phosphate isomerase, cytosolic (PGIC).